Consider the following 248-residue polypeptide: MALLEICCYSMECALTAQQNGADRVELCAAPKEGGLTPSLGVLKSVRQRVTIPVHPIIRPRGGDFCYSDGEFAAILEDVRTVRELGFPGLVTGVLDVDGNVDMPRMEKIMAAAGPLAVTFHRAFDMCANPLNTLNNLAELGVARVLTSGQKSDALQGLSKIMELIAHGDAPIIMAGAGVRAENLHHFLDAGVLEVHSSAGAWQASPMRYRNQGLSMSSDAHADEYSRYVVDGAAVAEMKGIIERHQAK.

This sequence belongs to the CutC family. In terms of assembly, homodimer.

It localises to the cytoplasm. The protein is PF03932 family protein CutC of Escherichia coli O7:K1 (strain IAI39 / ExPEC).